The chain runs to 60 residues: DNA gyrase inhibitor YacG (60 aa).

Positions 15, 18, 30, and 34 each coordinate Zn(2+).

Belongs to the DNA gyrase inhibitor YacG family. Interacts with GyrB. It depends on Zn(2+) as a cofactor.

Inhibits all the catalytic activities of DNA gyrase by preventing its interaction with DNA. Acts by binding directly to the C-terminal domain of GyrB, which probably disrupts DNA binding by the gyrase. The protein is DNA gyrase inhibitor YacG of Nitrobacter hamburgensis (strain DSM 10229 / NCIMB 13809 / X14).